The sequence spans 305 residues: Glycine--tRNA ligase alpha subunit (305 aa).

The protein belongs to the class-II aminoacyl-tRNA synthetase family. Tetramer of two alpha and two beta subunits.

It is found in the cytoplasm. It carries out the reaction tRNA(Gly) + glycine + ATP = glycyl-tRNA(Gly) + AMP + diphosphate. This Streptococcus suis (strain 05ZYH33) protein is Glycine--tRNA ligase alpha subunit.